The sequence spans 415 residues: WD repeat and FYVE domain-containing protein 2 (415 aa).

WD repeat units lie at residues 71–103 (HHFMPVAPTSLYYSEETYKLLVGLINGNVYEFS), 119–148 (CHAGPISGLGFALSSELIFSCSRDKSIVWH), 202–232 (AHTNAITSLTWDGNKKVLYSGSSDHLIIMWD), and 245–284 (GHNGKVTTLCAAPAAKRLFSADEHGKLMCWDMNCKRVETP). The segment at 286–357 (WKTSDCCQKC…ICNDCNARMK (72 aa)) adopts an FYVE-type zinc-finger fold. 8 residues coordinate Zn(2+): cysteine 292, cysteine 295, cysteine 319, cysteine 322, cysteine 327, cysteine 330, cysteine 349, and cysteine 352. Residues 373 to 403 (EIHTGITAMHLQETLGLLVTSGQNRVIMIWD) form a WD 5 repeat.

Functionally, plays a role in coelomocyte endocytosis. The protein is WD repeat and FYVE domain-containing protein 2 (wdfy-2) of Caenorhabditis elegans.